The sequence spans 492 residues: Ketol-acid reductoisomerase (NADP(+)) (492 aa).

The region spanning 15 to 208 is the KARI N-terminal Rossmann domain; sequence AQLGKCRFMA…GGHRAGVLES (194 aa). NADP(+) contacts are provided by residues 45-48, R68, R76, S78, and 108-110; these read CGAQ and DKQ. H132 is a catalytic residue. G158 lines the NADP(+) pocket. KARI C-terminal knotted domains lie at 209–344 and 345–485; these read SFVA…TAAQ and FEGK…MTDM. D217, E221, E389, and E393 together coordinate Mg(2+). S414 provides a ligand contact to substrate.

Belongs to the ketol-acid reductoisomerase family. The cofactor is Mg(2+).

The catalysed reaction is (2R)-2,3-dihydroxy-3-methylbutanoate + NADP(+) = (2S)-2-acetolactate + NADPH + H(+). It carries out the reaction (2R,3R)-2,3-dihydroxy-3-methylpentanoate + NADP(+) = (S)-2-ethyl-2-hydroxy-3-oxobutanoate + NADPH + H(+). It functions in the pathway amino-acid biosynthesis; L-isoleucine biosynthesis; L-isoleucine from 2-oxobutanoate: step 2/4. The protein operates within amino-acid biosynthesis; L-valine biosynthesis; L-valine from pyruvate: step 2/4. Functionally, involved in the biosynthesis of branched-chain amino acids (BCAA). Catalyzes an alkyl-migration followed by a ketol-acid reduction of (S)-2-acetolactate (S2AL) to yield (R)-2,3-dihydroxy-isovalerate. In the isomerase reaction, S2AL is rearranged via a Mg-dependent methyl migration to produce 3-hydroxy-3-methyl-2-ketobutyrate (HMKB). In the reductase reaction, this 2-ketoacid undergoes a metal-dependent reduction by NADPH to yield (R)-2,3-dihydroxy-isovalerate. In Erwinia tasmaniensis (strain DSM 17950 / CFBP 7177 / CIP 109463 / NCPPB 4357 / Et1/99), this protein is Ketol-acid reductoisomerase (NADP(+)).